Here is an 84-residue protein sequence, read N- to C-terminus: MAKKKSDQFEEALKKLQDIVEKLERGDMPLEEAMEAFSEGIRLARVCHGKLEEAERKVRILLKEQEGDWTTSPFEPASGEPPGG.

A disordered region spans residues 65–84 (QEGDWTTSPFEPASGEPPGG).

It belongs to the XseB family. As to quaternary structure, heterooligomer composed of large and small subunits.

Its subcellular location is the cytoplasm. The catalysed reaction is Exonucleolytic cleavage in either 5'- to 3'- or 3'- to 5'-direction to yield nucleoside 5'-phosphates.. In terms of biological role, bidirectionally degrades single-stranded DNA into large acid-insoluble oligonucleotides, which are then degraded further into small acid-soluble oligonucleotides. The protein is Exodeoxyribonuclease 7 small subunit of Syntrophobacter fumaroxidans (strain DSM 10017 / MPOB).